The chain runs to 421 residues: uncharacterized protein (421 aa).

Lys249 is modified (N6-(pyridoxal phosphate)lysine).

This sequence belongs to the class-I pyridoxal-phosphate-dependent aminotransferase family. Pyridoxal 5'-phosphate is required as a cofactor.

The protein localises to the cytoplasm. This is an uncharacterized protein from Schizosaccharomyces pombe (strain 972 / ATCC 24843) (Fission yeast).